A 202-amino-acid polypeptide reads, in one-letter code: Nucleoside triphosphate pyrophosphatase (202 aa).

The Proton acceptor role is filled by Asp79.

The protein belongs to the Maf family. Requires a divalent metal cation as cofactor.

Its subcellular location is the cytoplasm. It carries out the reaction a ribonucleoside 5'-triphosphate + H2O = a ribonucleoside 5'-phosphate + diphosphate + H(+). It catalyses the reaction a 2'-deoxyribonucleoside 5'-triphosphate + H2O = a 2'-deoxyribonucleoside 5'-phosphate + diphosphate + H(+). Its function is as follows. Nucleoside triphosphate pyrophosphatase. May have a dual role in cell division arrest and in preventing the incorporation of modified nucleotides into cellular nucleic acids. This Bradyrhizobium diazoefficiens (strain JCM 10833 / BCRC 13528 / IAM 13628 / NBRC 14792 / USDA 110) protein is Nucleoside triphosphate pyrophosphatase.